A 347-amino-acid chain; its full sequence is A-type ATP synthase subunit C (347 aa).

This sequence belongs to the V-ATPase V0D/AC39 subunit family. In terms of assembly, has multiple subunits with at least A(3), B(3), C, D, E, F, H, I and proteolipid K(x).

The protein localises to the cell membrane. Functionally, component of the A-type ATP synthase that produces ATP from ADP in the presence of a proton gradient across the membrane. In Haloquadratum walsbyi (strain DSM 16790 / HBSQ001), this protein is A-type ATP synthase subunit C.